A 318-amino-acid chain; its full sequence is Methionyl-tRNA formyltransferase (318 aa).

Residue serine 112–proline 115 coordinates (6S)-5,6,7,8-tetrahydrofolate.

It belongs to the Fmt family.

The enzyme catalyses L-methionyl-tRNA(fMet) + (6R)-10-formyltetrahydrofolate = N-formyl-L-methionyl-tRNA(fMet) + (6S)-5,6,7,8-tetrahydrofolate + H(+). Functionally, attaches a formyl group to the free amino group of methionyl-tRNA(fMet). The formyl group appears to play a dual role in the initiator identity of N-formylmethionyl-tRNA by promoting its recognition by IF2 and preventing the misappropriation of this tRNA by the elongation apparatus. The chain is Methionyl-tRNA formyltransferase from Haemophilus influenzae (strain PittEE).